Reading from the N-terminus, the 235-residue chain is Probable tetraspanin tspA (235 aa).

Over 1–18 (MVDTSNLLPQTPRLLKVP) the chain is Cytoplasmic. A helical membrane pass occupies residues 19–39 (LIILNIILWILGLVLVIVGGI). Topologically, residues 40 to 68 (CVSFLSNFKDFTKASDAKSALSNLTTSIP) are extracellular. An N-linked (GlcNAc...) asparagine glycan is attached at N62. Residues 69–89 (AGVLVIGILFVIFTVVGCFVA) form a helical membrane-spanning segment. Over 90 to 93 (YKEK) the chain is Cytoplasmic. The chain crosses the membrane as a helical span at residues 94 to 114 (LVGLVIYCAVMLILLVILIGV). The Extracellular segment spans residues 115–200 (GGKAITLHND…FSSKIYAVGA (86 aa)). N139, N143, and N160 each carry an N-linked (GlcNAc...) asparagine glycan. A helical membrane pass occupies residues 201 to 221 (AGLAIGIIELVAILFSLFLII). The Cytoplasmic segment spans residues 222–235 (RICRSPRTRSYDQY).

This sequence belongs to the tetraspanin (TM4SF) family.

The protein resides in the membrane. This is Probable tetraspanin tspA (tspA) from Dictyostelium discoideum (Social amoeba).